A 338-amino-acid chain; its full sequence is Malate dehydrogenase, mitochondrial (338 aa).

A mitochondrion-targeting transit peptide spans 1–24 (MLSALARPAGAALRRSFSTSAQNN). NAD(+)-binding positions include 31 to 37 (GASGGIG) and Asp57. A glycan (O-linked (GlcNAc) serine) is linked at Ser33. 2 positions are modified to N6-acetyllysine; alternate: Lys78 and Lys91. Residues Lys78 and Lys91 each carry the N6-succinyllysine; alternate modification. Arg104 and Arg110 together coordinate substrate. NAD(+) contacts are provided by residues Asn117 and 140-142 (ISN). Residue Asn142 participates in substrate binding. Lys165 is subject to N6-acetyllysine. A substrate-binding site is contributed by Arg176. N6-acetyllysine; alternate is present on Lys185. At Lys185 the chain carries N6-succinyllysine; alternate. Residue His200 is the Proton acceptor of the active site. Residue Lys203 is modified to N6-succinyllysine. An N6-acetyllysine; alternate mark is found at Lys215 and Lys239. N6-succinyllysine; alternate occurs at positions 215 and 239. The residue at position 239 (Lys239) is an N6-malonyllysine; alternate. Phosphoserine is present on Ser246. Met251 provides a ligand contact to NAD(+). Residue Lys269 is modified to N6-succinyllysine. Residues Lys296, Lys301, Lys307, Lys314, and Lys324 each carry the N6-acetyllysine; alternate modification. Residues Lys296, Lys301, Lys307, Lys314, and Lys324 each carry the N6-succinyllysine; alternate modification. At Lys307 the chain carries N6-malonyllysine; alternate. At Ser326 the chain carries Phosphoserine. N6-acetyllysine; alternate occurs at positions 328, 329, and 335. N6-succinyllysine; alternate is present on Lys328. N6-malonyllysine; alternate is present on Lys329. Position 335 is an N6-succinyllysine; alternate (Lys335).

The protein belongs to the LDH/MDH superfamily. MDH type 1 family. As to quaternary structure, homodimer. Post-translationally, acetylation is enhanced after treatment either with trichostin A (TCA) or with nicotinamide (NAM) with the appearance of tri- and tetraacetylations. Glucose also increases acetylation.

The protein localises to the mitochondrion matrix. It catalyses the reaction (S)-malate + NAD(+) = oxaloacetate + NADH + H(+). Enzyme activity is enhanced by acetylation. The sequence is that of Malate dehydrogenase, mitochondrial (MDH2) from Bos taurus (Bovine).